The primary structure comprises 447 residues: Tubulin beta-6 chain (447 aa).

GTP contacts are provided by Gln11, Glu69, Ser138, Gly142, Thr143, Gly144, Asn204, and Asn226. A Mg(2+)-binding site is contributed by Glu69. Residues 426–447 are disordered; that stretch reads QDATAEEEGEFDEDEELDDGMM. Over residues 429–447 the composition is skewed to acidic residues; sequence TAEEEGEFDEDEELDDGMM.

The protein belongs to the tubulin family. Dimer of alpha and beta chains. A typical microtubule is a hollow water-filled tube with an outer diameter of 25 nm and an inner diameter of 15 nM. Alpha-beta heterodimers associate head-to-tail to form protofilaments running lengthwise along the microtubule wall with the beta-tubulin subunit facing the microtubule plus end conferring a structural polarity. Microtubules usually have 13 protofilaments but different protofilament numbers can be found in some organisms and specialized cells. Requires Mg(2+) as cofactor.

The protein localises to the cytoplasm. Its subcellular location is the cytoskeleton. Functionally, tubulin is the major constituent of microtubules, a cylinder consisting of laterally associated linear protofilaments composed of alpha- and beta-tubulin heterodimers. Microtubules grow by the addition of GTP-tubulin dimers to the microtubule end, where a stabilizing cap forms. Below the cap, tubulin dimers are in GDP-bound state, owing to GTPase activity of alpha-tubulin. The polypeptide is Tubulin beta-6 chain (TUBB6) (Ectocarpus variabilis (Brown alga)).